Reading from the N-terminus, the 393-residue chain is Uroporphyrinogen decarboxylase, chloroplastic (393 aa).

Residues Met-1 to Val-64 are disordered. Over residues Ala-23–Pro-37 the composition is skewed to low complexity. The span at Ser-38–Gly-50 shows a compositional bias: basic and acidic residues. Substrate-binding positions include Arg-73–Arg-77, Phe-92, Ser-122, Asp-123, Tyr-200, Ser-255, and His-370.

Belongs to the uroporphyrinogen decarboxylase family. In terms of assembly, homodimer.

It is found in the plastid. It localises to the chloroplast. It catalyses the reaction uroporphyrinogen III + 4 H(+) = coproporphyrinogen III + 4 CO2. Its pathway is porphyrin-containing compound metabolism; protoporphyrin-IX biosynthesis; coproporphyrinogen-III from 5-aminolevulinate: step 4/4. In terms of biological role, catalyzes the decarboxylation of four acetate groups of uroporphyrinogen-III to yield coproporphyrinogen-III. The chain is Uroporphyrinogen decarboxylase, chloroplastic (LES22) from Zea mays (Maize).